A 1040-amino-acid polypeptide reads, in one-letter code: Multidrug resistance protein MdtB (1040 aa).

A run of 12 helical transmembrane segments spans residues 25–45 (LLMA…PVAA), 347–367 (LMLA…NIPA), 369–389 (IIPG…MVFL), 396–416 (LTLM…IVVI), 440–460 (IGFT…PLLF), 472–492 (FAVT…TLTP), 537–557 (WLTL…WIVI), 869–889 (LIVA…ESFI), 890–910 (HPIT…LALM), 911–931 (IAGS…IGIV), 968–988 (ILMT…STGV), and 998–1018 (IAMV…TPVI).

The protein belongs to the resistance-nodulation-cell division (RND) (TC 2.A.6) family. MdtB subfamily. In terms of assembly, part of a tripartite efflux system composed of MdtA, MdtB and MdtC. MdtB forms a heteromultimer with MdtC.

Its subcellular location is the cell inner membrane. The polypeptide is Multidrug resistance protein MdtB (Salmonella arizonae (strain ATCC BAA-731 / CDC346-86 / RSK2980)).